A 286-amino-acid chain; its full sequence is ATP synthase gamma chain (286 aa).

This sequence belongs to the ATPase gamma chain family. As to quaternary structure, F-type ATPases have 2 components, CF(1) - the catalytic core - and CF(0) - the membrane proton channel. CF(1) has five subunits: alpha(3), beta(3), gamma(1), delta(1), epsilon(1). CF(0) has three main subunits: a, b and c.

The protein localises to the cell inner membrane. Its function is as follows. Produces ATP from ADP in the presence of a proton gradient across the membrane. The gamma chain is believed to be important in regulating ATPase activity and the flow of protons through the CF(0) complex. The sequence is that of ATP synthase gamma chain from Pseudoalteromonas translucida (strain TAC 125).